A 493-amino-acid polypeptide reads, in one-letter code: Intermediate cleaving peptidase 55, mitochondrial (493 aa).

The transit peptide at 1-19 directs the protein to the mitochondrion; it reads MQFLARNLVRRVSRTQVVS. Mn(2+)-binding residues include aspartate 296, aspartate 307, histidine 383, glutamate 410, and glutamate 433.

The protein belongs to the peptidase M24B family. Mn(2+) serves as cofactor.

The protein localises to the mitochondrion. It is found in the nucleus. Aminopeptidase which cleaves preprotein intermediates that carry destabilizing N-ter amino acid residues after the mitochondrial processing peptidase (MPP) cleavage site and is thus critical for stabilization of the mitochondrial proteome. This Arabidopsis thaliana (Mouse-ear cress) protein is Intermediate cleaving peptidase 55, mitochondrial.